Here is a 209-residue protein sequence, read N- to C-terminus: LexA repressor (209 aa).

Positions valine 32–alanine 52 form a DNA-binding region, H-T-H motif. Residues serine 131 and lysine 169 each act as for autocatalytic cleavage activity in the active site.

Belongs to the peptidase S24 family. In terms of assembly, homodimer.

It catalyses the reaction Hydrolysis of Ala-|-Gly bond in repressor LexA.. Represses a number of genes involved in the response to DNA damage (SOS response), including recA and lexA. In the presence of single-stranded DNA, RecA interacts with LexA causing an autocatalytic cleavage which disrupts the DNA-binding part of LexA, leading to derepression of the SOS regulon and eventually DNA repair. The protein is LexA repressor of Enterococcus faecalis (strain ATCC 700802 / V583).